Consider the following 256-residue polypeptide: Omega-amidase YafV (256 aa).

Residues 4–234 (LKITLLQQPL…ATRIDAELSM (231 aa)) form the CN hydrolase domain. The active-site Proton acceptor is the glutamate 42. Lysine 107 is an active-site residue. Cysteine 141 (nucleophile) is an active-site residue.

It belongs to the carbon-nitrogen hydrolase superfamily. NIT1/NIT2 family.

The catalysed reaction is a monoamide of a dicarboxylate + H2O = a dicarboxylate + NH4(+). Hydrolyzes alpha-ketoglutaramate (a-KGM) to alpha-ketoglutarate (alpha-KG) and ammonia (specific activity 6.65 umol/min/mg), has weak activity on L-glutamine, almost no activity on deaminated glutathione (dGSH) and none on glutathione. May function as a metabolite repair enzyme. The chain is Omega-amidase YafV (yafV) from Escherichia coli (strain B / BL21-DE3).